The sequence spans 119 residues: Ribonuclease P protein component (119 aa).

This sequence belongs to the RnpA family. Consists of a catalytic RNA component (M1 or rnpB) and a protein subunit.

It carries out the reaction Endonucleolytic cleavage of RNA, removing 5'-extranucleotides from tRNA precursor.. Functionally, RNaseP catalyzes the removal of the 5'-leader sequence from pre-tRNA to produce the mature 5'-terminus. It can also cleave other RNA substrates such as 4.5S RNA. The protein component plays an auxiliary but essential role in vivo by binding to the 5'-leader sequence and broadening the substrate specificity of the ribozyme. This is Ribonuclease P protein component from Bacillus pumilus (strain SAFR-032).